Reading from the N-terminus, the 389-residue chain is Chaperone protein DnaJ (389 aa).

The region spanning 6-70 (DYYEVLGLAK…QKKAAYDQYG (65 aa)) is the J domain. The CR-type zinc finger occupies 142-224 (GVEKEIKYNR…CHGTGHEKKA (83 aa)). Residues cysteine 155, cysteine 158, cysteine 172, cysteine 175, cysteine 198, cysteine 201, cysteine 212, and cysteine 215 each coordinate Zn(2+). CXXCXGXG motif repeat units follow at residues 155–162 (CATCGGNG), 172–179 (CHKCHGSG), 198–205 (CDVCHGTG), and 212–219 (CPTCHGTG).

This sequence belongs to the DnaJ family. Homodimer. Zn(2+) is required as a cofactor.

It is found in the cytoplasm. In terms of biological role, participates actively in the response to hyperosmotic and heat shock by preventing the aggregation of stress-denatured proteins and by disaggregating proteins, also in an autonomous, DnaK-independent fashion. Unfolded proteins bind initially to DnaJ; upon interaction with the DnaJ-bound protein, DnaK hydrolyzes its bound ATP, resulting in the formation of a stable complex. GrpE releases ADP from DnaK; ATP binding to DnaK triggers the release of the substrate protein, thus completing the reaction cycle. Several rounds of ATP-dependent interactions between DnaJ, DnaK and GrpE are required for fully efficient folding. Also involved, together with DnaK and GrpE, in the DNA replication of plasmids through activation of initiation proteins. The polypeptide is Chaperone protein DnaJ (Enterococcus faecalis (strain ATCC 700802 / V583)).